The sequence spans 1035 residues: NHS-like protein 3 (1035 aa).

A lipid anchor (N-myristoyl glycine) is attached at Val-2. Disordered stretches follow at residues 23–44 (KAENDKHLSVGPGQGPGSAVDE), 76–105 (QEKQKLNKGGWDHGDTQSIQSSRTGPDEDN), and 133–162 (IQRKGSTFRPHDSFPKSGKSGRRRRERRST). Residues 76 to 90 (QEKQKLNKGGWDHGD) show a composition bias toward basic and acidic residues. Phosphoserine is present on residues Ser-93, Ser-138, Ser-145, and Ser-161. Thr-162 carries the phosphothreonine modification. The residue at position 215 (Ser-215) is a Phosphoserine. Arg-320 is subject to Asymmetric dimethylarginine. Phosphoserine occurs at positions 322, 327, 330, 338, 339, 341, and 342. Disordered stretches follow at residues 332–869 (RSLG…APSS) and 885–1035 (SEGL…KELA). Residues 338–365 (SSVSSPQPRSRHPSSSSDTWSHSQSSDT) show a composition bias toward low complexity. Over residues 366-388 (IVSDGSTLSSKGGSEGQPESSTA) the composition is skewed to polar residues. Ser-400, Ser-404, and Ser-409 each carry phosphoserine. The segment covering 411-429 (AEASDTLSIRSSGQLSGRS) has biased composition (polar residues). Positions 431 to 449 (SLRKLKRPPPPPRRTHSLH) are enriched in basic residues. The span at 517–532 (RTLSPSSGYSSQSGTP) shows a compositional bias: low complexity. A Phosphothreonine modification is found at Thr-531. Residues 543–552 (PASPGKAQPP) show a composition bias toward pro residues. At Ser-545 the chain carries Phosphoserine. Over residues 562–589 (SPGASVSSSLTSLCSSSSDPAPSDRSGP) the composition is skewed to low complexity. Thr-593 carries the phosphothreonine modification. The span at 602 to 624 (PPHPKVPAPFSPPPSKPRSPNPA) shows a compositional bias: pro residues. Phosphoserine is present on Ser-612. Low complexity-rich tracts occupy residues 625–645 (APALAAPAVVPGPVSTTDASP) and 652–662 (QTTLTPLQESP). A phosphoserine mark is found at Ser-669 and Ser-673. Composition is skewed to pro residues over residues 669-685 (SPPPSPPPSYHPPPPPT) and 709-718 (NWPPPPPPAP). Low complexity predominate over residues 737–765 (SVASPEPAGPSGSPELVSSPAASSSSATA). Over residues 771–784 (PGSPDPPPAPPAPA) the composition is skewed to pro residues. Over residues 838-848 (GAPTPALGPSA) the composition is skewed to low complexity. Phosphoserine is present on residues Ser-858, Ser-862, and Ser-868. The span at 894 to 906 (NGPPEAEPRPPQS) shows a compositional bias: pro residues. A phosphoserine mark is found at Ser-929, Ser-959, Ser-971, and Ser-979. A compositionally biased stretch (pro residues) spans 961 to 980 (KAPPPVARKPSVGVPPPASP). A compositionally biased stretch (basic and acidic residues) spans 999–1008 (TQDRTKRELA).

In terms of tissue distribution, expressed in lung.

Its function is as follows. Able to directly activate the TNF-NFkappaB signaling pathway. The protein is NHS-like protein 3 of Homo sapiens (Human).